The primary structure comprises 481 residues: 7-deoxyloganetin glucosyltransferase (481 aa).

His-22 acts as the Proton acceptor in catalysis. Residue His-22 coordinates an anthocyanidin. Asp-126 (charge relay) is an active-site residue. UDP-alpha-D-glucose-binding residues include Thr-148, Gln-363, His-378, Trp-381, Asn-382, Ser-383, and Glu-386. Ala-401 lines the an anthocyanidin pocket. UDP-alpha-D-glucose-binding residues include Glu-402 and Gln-403.

This sequence belongs to the UDP-glycosyltransferase family. Ubiquitous. Very low expression in stems.

It carries out the reaction 7-deoxyloganetin + UDP-alpha-D-glucose = 7-deoxyloganin + UDP + H(+). Functionally, iridoid glucosyltransferase acting on genipin and 7-deoxyloganetin. No activity with 7-deoxyloganetic acid. Involved in geniposide biosynthesis. The chain is 7-deoxyloganetin glucosyltransferase (UGT85A24) from Gardenia jasminoides (Cape jasmine).